A 585-amino-acid polypeptide reads, in one-letter code: Pyruvate kinase (585 aa).

Arginine 32 is a binding site for substrate. The K(+) site is built by asparagine 34, serine 36, aspartate 66, and threonine 67. 34 to 37 (NFSH) provides a ligand contact to ATP. Arginine 73 and lysine 156 together coordinate ATP. Position 222 (glutamate 222) interacts with Mg(2+). The substrate site is built by glycine 245, aspartate 246, and threonine 278. Aspartate 246 is a Mg(2+) binding site.

It belongs to the pyruvate kinase family. In the C-terminal section; belongs to the PEP-utilizing enzyme family. In terms of assembly, homotetramer. Requires Mg(2+) as cofactor. K(+) serves as cofactor.

The catalysed reaction is pyruvate + ATP = phosphoenolpyruvate + ADP + H(+). The protein operates within carbohydrate degradation; glycolysis; pyruvate from D-glyceraldehyde 3-phosphate: step 5/5. In Bacillus licheniformis, this protein is Pyruvate kinase (pyk).